The chain runs to 130 residues: Protein ApaG (130 aa).

One can recognise an ApaG domain in the interval 3–127 (STITRDIQIT…FSLDSPFSRQ (125 aa)).

The sequence is that of Protein ApaG from Beijerinckia indica subsp. indica (strain ATCC 9039 / DSM 1715 / NCIMB 8712).